The chain runs to 131 residues: Small ribosomal subunit protein bS6 (131 aa).

Residues E98 to E131 form a disordered region. The span at K104–F116 shows a compositional bias: basic and acidic residues. A compositionally biased stretch (acidic residues) spans T120–E131.

It belongs to the bacterial ribosomal protein bS6 family.

Functionally, binds together with bS18 to 16S ribosomal RNA. The sequence is that of Small ribosomal subunit protein bS6 from Cronobacter sakazakii (strain ATCC BAA-894) (Enterobacter sakazakii).